The following is a 176-amino-acid chain: Dual-action ribosomal maturation protein DarP (176 aa).

Acidic residues predominate over residues 1 to 16 (MRLIDPDADLEFDPDS). Residues 1 to 29 (MRLIDPDADLEFDPDSVYDGPSKSQKKRE) form a disordered region.

The protein belongs to the DarP family.

The protein localises to the cytoplasm. Its function is as follows. Member of a network of 50S ribosomal subunit biogenesis factors which assembles along the 30S-50S interface, preventing incorrect 23S rRNA structures from forming. Promotes peptidyl transferase center (PTC) maturation. This is Dual-action ribosomal maturation protein DarP from Thiobacillus denitrificans (strain ATCC 25259 / T1).